The chain runs to 518 residues: Xylose import ATP-binding protein XylG (518 aa).

ABC transporter domains lie at 6-245 (LQMN…VGRE) and 262-507 (FEAR…LSHS). 38–45 (GENGAGKS) lines the ATP pocket.

This sequence belongs to the ABC transporter superfamily. Xylose importer (TC 3.A.1.2.4) family. The complex is composed of two ATP-binding proteins (XylG), two transmembrane proteins (XylH) and a solute-binding protein (XylF).

It localises to the cell inner membrane. The catalysed reaction is D-xylose(out) + ATP + H2O = D-xylose(in) + ADP + phosphate + H(+). Part of the ABC transporter complex XylFGH involved in xylose import. Responsible for energy coupling to the transport system. The chain is Xylose import ATP-binding protein XylG from Pseudomonas syringae pv. syringae (strain B728a).